The primary structure comprises 442 residues: uncharacterized protein (442 aa).

4 residues coordinate [4Fe-4S] cluster: C43, C49, C52, and C130. S-adenosyl-L-methionine-binding residues include Q273, Y302, E323, and D372. C399 (nucleophile) is an active-site residue.

Belongs to the class I-like SAM-binding methyltransferase superfamily. RNA M5U methyltransferase family.

This is an uncharacterized protein from Protochlamydia amoebophila (strain UWE25).